A 276-amino-acid polypeptide reads, in one-letter code: Glucosamine-6-phosphate deaminase 2 (276 aa).

Residue aspartate 72 is the Proton acceptor; for enolization step of the active site. A coiled-coil region spans residues 106–130 (ILDGNATDLQAECDAFEKKIKEAGG). Aspartate 141 acts as the For ring-opening step in catalysis. Histidine 143 acts as the Proton acceptor; for ring-opening step in catalysis. Glutamate 148 (for ring-opening step) is an active-site residue. Phosphothreonine is present on threonine 161.

The protein belongs to the glucosamine/galactosamine-6-phosphate isomerase family. In terms of assembly, homohexamer.

It is found in the cytoplasm. It catalyses the reaction alpha-D-glucosamine 6-phosphate + H2O = beta-D-fructose 6-phosphate + NH4(+). It functions in the pathway nucleotide-sugar biosynthesis; UDP-N-acetyl-alpha-D-glucosamine biosynthesis; alpha-D-glucosamine 6-phosphate from D-fructose 6-phosphate: step 1/1. Allosterically activated by N-acetylglucosamine-6-phosphate (GlcNAc6P). Functionally, catalyzes the reversible conversion of alpha-D-glucosamine 6-phosphate (GlcN-6P) into beta-D-fructose 6-phosphate (Fru-6P) and ammonium ion, a regulatory reaction step in de novo uridine diphosphate-N-acetyl-alpha-D-glucosamine (UDP-GlcNAc) biosynthesis via hexosamine pathway. Deamination is coupled to aldo-keto isomerization mediating the metabolic flux from UDP-GlcNAc toward Fru-6P. At high ammonium level can drive amination and isomerization of Fru-6P toward hexosamines and UDP-GlcNAc synthesis. Has a role in fine tuning the metabolic fluctuations of cytosolic UDP-GlcNAc and their effects on hyaluronan synthesis that occur during tissue remodeling. The chain is Glucosamine-6-phosphate deaminase 2 from Bos taurus (Bovine).